Consider the following 369-residue polypeptide: Phospho-N-acetylmuramoyl-pentapeptide-transferase (369 aa).

10 consecutive transmembrane segments (helical) span residues 3–23 (ALLG…PLFI), 53–73 (GGIV…LLTW), 81–101 (VTPS…VGFL), 118–138 (WQKI…AITL), 162–182 (FMAL…CLIV), 198–218 (LAAG…FWQF), 240–260 (PLDL…FLWW), 267–287 (IFMG…LAIL), 290–310 (TELL…SVVL), and 347–367 (FWII…LEWI).

It belongs to the glycosyltransferase 4 family. MraY subfamily. Mg(2+) serves as cofactor.

The protein resides in the cell membrane. The enzyme catalyses UDP-N-acetyl-alpha-D-muramoyl-L-alanyl-gamma-D-glutamyl-meso-2,6-diaminopimeloyl-D-alanyl-D-alanine + di-trans,octa-cis-undecaprenyl phosphate = di-trans,octa-cis-undecaprenyl diphospho-N-acetyl-alpha-D-muramoyl-L-alanyl-D-glutamyl-meso-2,6-diaminopimeloyl-D-alanyl-D-alanine + UMP. It participates in cell wall biogenesis; peptidoglycan biosynthesis. Its function is as follows. Catalyzes the initial step of the lipid cycle reactions in the biosynthesis of the cell wall peptidoglycan: transfers peptidoglycan precursor phospho-MurNAc-pentapeptide from UDP-MurNAc-pentapeptide onto the lipid carrier undecaprenyl phosphate, yielding undecaprenyl-pyrophosphoryl-MurNAc-pentapeptide, known as lipid I. In Clavibacter sepedonicus (Clavibacter michiganensis subsp. sepedonicus), this protein is Phospho-N-acetylmuramoyl-pentapeptide-transferase.